A 278-amino-acid chain; its full sequence is Inosose isomerase (278 aa).

E142, D174, H200, and E246 together coordinate a divalent metal cation.

It belongs to the IolI family. It depends on Mn(2+) as a cofactor. The cofactor is Fe(2+). Co(2+) is required as a cofactor.

The enzyme catalyses scyllo-inosose = scyllo-inosine. It participates in polyol metabolism; myo-inositol degradation into acetyl-CoA. Its function is as follows. Involved in the reversible interconverion of 2-keto-myo-inositol (2KMI, inosose or 2,4,6/3,5-pentahydroxycyclohexanone) to 1-keto-D-chiro-inositol (1KDCI or 2,3,5/4,6-pentahydroxycyclohexanone). In Bacillus subtilis (strain 168), this protein is Inosose isomerase (iolI).